Reading from the N-terminus, the 254-residue chain is 5-oxoprolinase subunit A (254 aa).

The protein belongs to the LamB/PxpA family. Forms a complex composed of PxpA, PxpB and PxpC.

It carries out the reaction 5-oxo-L-proline + ATP + 2 H2O = L-glutamate + ADP + phosphate + H(+). Its function is as follows. Catalyzes the cleavage of 5-oxoproline to form L-glutamate coupled to the hydrolysis of ATP to ADP and inorganic phosphate. The sequence is that of 5-oxoprolinase subunit A from Burkholderia mallei (strain NCTC 10247).